The chain runs to 337 residues: 2-oxoglutarate-Fe(II) type oxidoreductase (337 aa).

The region spanning 179-282 is the Fe2OG dioxygenase domain; it reads AIATLRYLHY…RYSIPFFFTG (104 aa). Fe cation-binding residues include His-205, Asp-207, and His-263. Arg-273 is a binding site for 2-oxoglutarate.

The protein belongs to the iron/ascorbate-dependent oxidoreductase family. Requires Fe(2+) as cofactor. In terms of tissue distribution, endocrocin is specifically produced in conidia.

It participates in secondary metabolite biosynthesis. Functionally, 2-oxoglutarate-Fe(II) type oxidoreductase; part of the gene cluster that mediates the biosynthesis of endocrocin, a simple anthraquinone interesting for many biotechnological applications. The pathway begins with the synthesis of atrochrysone thioester by the polyketide synthase (PKS) encA. The atrochrysone carboxyl ACP thioesterase encB then breaks the thioester bond and releases the atrochrysone carboxylic acid from encA. The atrochrysone carboxylic acid is then converted to endocrocin anthrone which is further oxidized into endocrocin by encC. The exact function of encD has not been identified yet, but it negatively regulates endocrocin production, likely through the modification of endocrocin itself. The polypeptide is 2-oxoglutarate-Fe(II) type oxidoreductase (Aspergillus fumigatus (strain ATCC MYA-4609 / CBS 101355 / FGSC A1100 / Af293) (Neosartorya fumigata)).